Consider the following 499-residue polypeptide: uncharacterized protein (499 aa).

Helical transmembrane passes span 51-71 (LLFRLDLVLAPTIMILYLVAF), 98-118 (IIASVFYVTFILFEMPTTLLM), 127-147 (LAFIVISYSLTTIFTGFCHNF), 155-175 (LVLGFCEAGLFPCLALYLTMI), 187-207 (YLFASSALSGAFGGLFAYAVL), 220-240 (WLFIIEGLIGFVCGVAVYFII), 301-321 (CLYGFSTFLPAIISGMGYTSL), 325-345 (YMTIPVYILGAATYIAASFLS), 352-372 (GIILIIGNIFPIVGYILLLAC), 378-398 (VLYFACYLCSVGVYTGAGLNV), 412-432 (ATAISLQLAIANSSGILAGQI), and 444-464 (LTSLIAIFISTVLHVVNIFFL).

The protein belongs to the major facilitator superfamily. Allantoate permease family.

It localises to the golgi apparatus. The protein resides in the membrane. This is an uncharacterized protein from Schizosaccharomyces pombe (strain 972 / ATCC 24843) (Fission yeast).